The chain runs to 590 residues: Probable metalloendopeptidase G1-type (590 aa).

His41 lines the Zn(2+) pocket. Glu44 is a catalytic residue. His45 lines the Zn(2+) pocket.

The protein belongs to the peptidase M44 family. Requires Zn(2+) as cofactor.

Seems to be involved in viral proteins maturation by cleavage at Ala-Gly-|-Xaa motifs. The chain is Probable metalloendopeptidase G1-type from Oryctolagus cuniculus (Rabbit).